Here is a 209-residue protein sequence, read N- to C-terminus: MKKAIIGRKIGMTQIFDENGKVIPVTVVEAGPCAVLQKKTEEKDGYNAIQVGFEDIREKLANKPKKGHFAKAGVSLKRIVREFRLENIDEYEVGTEIKADVFAAGDKVDVTGVSKGKGFQGTIKRWNFHRGPMAHGSKYHRAVGSMGAASDPSRTFKNKKMPGHMGNKKSTILNIEVVKVMADKNVLLIKGGIPGPNKGYVVIKDTVKA.

Positions 144–165 (GSMGAASDPSRTFKNKKMPGHM) are disordered.

It belongs to the universal ribosomal protein uL3 family. Part of the 50S ribosomal subunit. Forms a cluster with proteins L14 and L19.

Its function is as follows. One of the primary rRNA binding proteins, it binds directly near the 3'-end of the 23S rRNA, where it nucleates assembly of the 50S subunit. In Clostridium novyi (strain NT), this protein is Large ribosomal subunit protein uL3.